Consider the following 783-residue polypeptide: MVAKPPVMSFHFAQDLWPEQNIKDSFQKVTLRRYGKCEYENLQLRKGCKHVDECTGHKGGHNTVNQCLTATPSKIFQCNKYVKVFDKFSNSNRYKRRHTGNKHFKCKECSKSFCVLSQLTQHRRIHTRVNSYKCEECGKAFNWFSTLTKHKRIHTGEKPYKCEECGKAFNQSSQLTRHKIIHTEEKPNKCEECGKAFKQASHLTIHKIIHTGEKPYKYEECGKVFSQSSHLTTQKILHTGENLYKCKECGKAFNLFSNLTNHKRIHAGEKPYKCKECGRAFNISSNLNKQEKIHTGGKLNKCEECDKAFNRSLKLTAHKKILMEEKPYKCEECGKVFNQFSTLTRHKIIHTGEKPYKCKECGKAFNQSSNLTEHKKIHTAEKSYKCEECGKAFNQHSNLINHRKIYSGEKPYKCEECGKAFNRSSTLTRHKKIHTGEKPYKCEECDRAFSQSSNLTEHKKIHTGEKPYKCEECGKAFNRFSTLTKHKRIHTGEKPYKCEECGKAFNQSYQLTRHKIVHTKEKLNKCEEFGKAFKQSSHRTIHKIIHTGEKPYKCEEHGKVFNQSSNLTTQKIIHTGENLYKFEEHGKAFNLFSNITNHKIIYTGEKPHKCEECGKAYNRFSNLTIHKRIHTGEKPYQCAECGKAFNCSSTLNRHKIIHTGEKPYKCKECGKAFNLSSTLTAHKKIHTGEKPYKCEECGKAFNQSSNLTTHKKIHTSEKPYKCEECGKSFNQFSSLNIHKIIHTGEKPYKCGDYGRAFNLSSNLTTHKKIHTGEKPYKCEYGKT.

A C2H2-type 1; atypical zinc finger spans residues Phe-76–His-98. 3 consecutive C2H2-type zinc fingers follow at residues Phe-104 to His-126, Tyr-132 to His-154, and Tyr-160 to His-182. A Glycyl lysine isopeptide (Lys-Gly) (interchain with G-Cter in SUMO2) cross-link involves residue Lys-186. Residues Asn-188 to His-210 form a C2H2-type 5 zinc finger. A C2H2-type 6; atypical zinc finger spans residues Tyr-216–His-238. Residues Tyr-244–His-266 form a C2H2-type 7 zinc finger. A C2H2-type 8; atypical zinc finger spans residues Tyr-272–His-294. Residues Asn-300–Leu-322 form a C2H2-type 9; atypical zinc finger. 2 C2H2-type zinc fingers span residues Tyr-328–His-350 and Tyr-356–His-378. A C2H2-type 12; atypical zinc finger spans residues Tyr-384–Tyr-406. 4 consecutive C2H2-type zinc fingers follow at residues Tyr-412–His-434, Tyr-440–His-462, Tyr-468–His-490, and Tyr-496–His-518. A C2H2-type 17; atypical zinc finger spans residues Asn-524 to His-546. The segment at Tyr-552 to His-574 adopts a C2H2-type 18; atypical zinc-finger fold. The C2H2-type 19; atypical zinc finger occupies Tyr-580 to Tyr-602. 5 consecutive C2H2-type zinc fingers follow at residues His-608–His-630, Tyr-636–His-658, Tyr-664–His-686, Tyr-692–His-714, and Tyr-720–His-742. Residues Tyr-748–His-770 form a C2H2-type 25; atypical zinc finger.

It belongs to the krueppel C2H2-type zinc-finger protein family. Expressed in brain, heart, skeletal muscle, kidney and pancreas. Weakly expressed in aorta, liver and lung.

It is found in the nucleus. In terms of biological role, may be involved in transcriptional regulation. The chain is Zinc finger protein 107 (ZNF107) from Homo sapiens (Human).